The following is a 491-amino-acid chain: Ketol-acid reductoisomerase (NADP(+)) (491 aa).

Residues 15–208 (AQLGKCRFMG…GGHRAGVLES (194 aa)) form the KARI N-terminal Rossmann domain. NADP(+) contacts are provided by residues 45 to 48 (CGAQ), arginine 68, arginine 76, serine 78, and 108 to 110 (DKQ). Histidine 132 is an active-site residue. Glycine 158 is a binding site for NADP(+). KARI C-terminal knotted domains lie at 209–344 (SFVA…TAPQ) and 345–484 (YEGK…MTDM). Mg(2+)-binding residues include aspartate 217, glutamate 221, glutamate 389, and glutamate 393. Serine 414 lines the substrate pocket.

It belongs to the ketol-acid reductoisomerase family. Mg(2+) serves as cofactor.

The enzyme catalyses (2R)-2,3-dihydroxy-3-methylbutanoate + NADP(+) = (2S)-2-acetolactate + NADPH + H(+). It carries out the reaction (2R,3R)-2,3-dihydroxy-3-methylpentanoate + NADP(+) = (S)-2-ethyl-2-hydroxy-3-oxobutanoate + NADPH + H(+). It participates in amino-acid biosynthesis; L-isoleucine biosynthesis; L-isoleucine from 2-oxobutanoate: step 2/4. Its pathway is amino-acid biosynthesis; L-valine biosynthesis; L-valine from pyruvate: step 2/4. Functionally, involved in the biosynthesis of branched-chain amino acids (BCAA). Catalyzes an alkyl-migration followed by a ketol-acid reduction of (S)-2-acetolactate (S2AL) to yield (R)-2,3-dihydroxy-isovalerate. In the isomerase reaction, S2AL is rearranged via a Mg-dependent methyl migration to produce 3-hydroxy-3-methyl-2-ketobutyrate (HMKB). In the reductase reaction, this 2-ketoacid undergoes a metal-dependent reduction by NADPH to yield (R)-2,3-dihydroxy-isovalerate. This chain is Ketol-acid reductoisomerase (NADP(+)), found in Klebsiella pneumoniae (strain 342).